A 122-amino-acid polypeptide reads, in one-letter code: NADH-quinone oxidoreductase subunit A (122 aa).

3 consecutive transmembrane segments (helical) span residues 10 to 30 (LIIF…LTAG), 67 to 87 (FALL…WAVV), and 91 to 111 (LGLF…IGLI).

This sequence belongs to the complex I subunit 3 family. As to quaternary structure, NDH-1 is composed of 14 different subunits. Subunits NuoA, H, J, K, L, M, N constitute the membrane sector of the complex.

Its subcellular location is the cell membrane. It catalyses the reaction a quinone + NADH + 5 H(+)(in) = a quinol + NAD(+) + 4 H(+)(out). Functionally, NDH-1 shuttles electrons from NADH, via FMN and iron-sulfur (Fe-S) centers, to quinones in the respiratory chain. The immediate electron acceptor for the enzyme in this species is believed to be a menaquinone. Couples the redox reaction to proton translocation (for every two electrons transferred, four hydrogen ions are translocated across the cytoplasmic membrane), and thus conserves the redox energy in a proton gradient. This is NADH-quinone oxidoreductase subunit A from Geobacillus kaustophilus (strain HTA426).